A 394-amino-acid polypeptide reads, in one-letter code: Phosphoglycerate kinase (394 aa).

Substrate is bound by residues 21 to 23 (DFN), Arg37, 60 to 63 (HLGR), Arg119, and Arg152. ATP contacts are provided by residues Lys202, Gly293, Glu324, and 350 to 353 (GGDS).

It belongs to the phosphoglycerate kinase family. Monomer.

Its subcellular location is the cytoplasm. The catalysed reaction is (2R)-3-phosphoglycerate + ATP = (2R)-3-phospho-glyceroyl phosphate + ADP. It participates in carbohydrate degradation; glycolysis; pyruvate from D-glyceraldehyde 3-phosphate: step 2/5. The chain is Phosphoglycerate kinase from Caldanaerobacter subterraneus subsp. tengcongensis (strain DSM 15242 / JCM 11007 / NBRC 100824 / MB4) (Thermoanaerobacter tengcongensis).